A 159-amino-acid polypeptide reads, in one-letter code: RNA pyrophosphohydrolase (159 aa).

The 144-residue stretch at Gly6–Lys149 folds into the Nudix hydrolase domain. Positions Gly38 to Gly59 match the Nudix box motif.

The protein belongs to the Nudix hydrolase family. RppH subfamily. A divalent metal cation serves as cofactor.

Functionally, accelerates the degradation of transcripts by removing pyrophosphate from the 5'-end of triphosphorylated RNA, leading to a more labile monophosphorylated state that can stimulate subsequent ribonuclease cleavage. In Pseudomonas savastanoi pv. phaseolicola (strain 1448A / Race 6) (Pseudomonas syringae pv. phaseolicola (strain 1448A / Race 6)), this protein is RNA pyrophosphohydrolase.